We begin with the raw amino-acid sequence, 357 residues long: Non-structural protein NS2 (357 aa).

Disordered stretches follow at residues 162–199 and 228–268; these read QNER…AKEM and LDEK…KTHI. Composition is skewed to acidic residues over residues 230–243 and 250–260; these read EKDE…EDEE and DDDEQGEDASD.

This sequence belongs to the orbivirus non-structural protein NS2 family.

Its function is as follows. Single-stranded RNA-binding protein. In Antilocapra americana (Pronghorn), this protein is Non-structural protein NS2 (Segment-8).